The primary structure comprises 284 residues: 2-dehydro-3-deoxyphosphooctonate aldolase (284 aa).

Belongs to the KdsA family.

The protein resides in the cytoplasm. The catalysed reaction is D-arabinose 5-phosphate + phosphoenolpyruvate + H2O = 3-deoxy-alpha-D-manno-2-octulosonate-8-phosphate + phosphate. Its pathway is carbohydrate biosynthesis; 3-deoxy-D-manno-octulosonate biosynthesis; 3-deoxy-D-manno-octulosonate from D-ribulose 5-phosphate: step 2/3. It functions in the pathway bacterial outer membrane biogenesis; lipopolysaccharide biosynthesis. This Enterobacter sp. (strain 638) protein is 2-dehydro-3-deoxyphosphooctonate aldolase.